The primary structure comprises 322 residues: MELSRRNRSLLSVVLNLLALSFSVAAFFTSYWCEGTHKVVKPPCLSAVKSKNCQALALNSSSTGSDATDTNGTLNPNVVHYNWETGDDKYAFKYFHTGFWFSCEKHQGEEACRSFIELSPDSEKGVLWLSVISEFLYIILLSLGFLLMCLEFFSSSNFIDGLKINAFAAIITVLSGLLGMVAHMMYMTVFQVTVNLGPKDWRPQTWYYGWSFGLAWLSFTLCMSASVLTLNTYTKTILEFKYRRRIFEKNVRECNPFLDPEMVRFLWEKYIFSVSSTVEDPFNWHKGFGSPIFVDIGSITDLPGAVKEEERGMDLEDDGDQC.

At 1–8 (MELSRRNR) the chain is on the cytoplasmic side. A helical transmembrane segment spans residues 9–29 (SLLSVVLNLLALSFSVAAFFT). The Extracellular portion of the chain corresponds to 30–125 (SYWCEGTHKV…IELSPDSEKG (96 aa)). Residues 126–146 (VLWLSVISEFLYIILLSLGFL) form a helical membrane-spanning segment. The Cytoplasmic portion of the chain corresponds to 147 to 166 (LMCLEFFSSSNFIDGLKINA). A helical membrane pass occupies residues 167–187 (FAAIITVLSGLLGMVAHMMYM). The Extracellular portion of the chain corresponds to 188–209 (TVFQVTVNLGPKDWRPQTWYYG). Residues 210–230 (WSFGLAWLSFTLCMSASVLTL) traverse the membrane as a helical segment. Topologically, residues 231–322 (NTYTKTILEF…MDLEDDGDQC (92 aa)) are cytoplasmic.

This sequence belongs to the GSG1 family. In terms of assembly, component of the AMPAR complex.

The protein localises to the cell membrane. It localises to the synapse. In terms of biological role, as a component of the AMPAR complex, modifies AMPA receptor (AMPAR) gating. This Xenopus tropicalis (Western clawed frog) protein is Germ cell-specific gene 1-like protein (gsg1l).